A 75-amino-acid polypeptide reads, in one-letter code: Large ribosomal subunit protein bL28c (75 aa).

The protein belongs to the bacterial ribosomal protein bL28 family.

It localises to the plastid. The protein resides in the chloroplast. This is Large ribosomal subunit protein bL28c from Cyanidioschyzon merolae (strain NIES-3377 / 10D) (Unicellular red alga).